Reading from the N-terminus, the 233-residue chain is Putative nosiheptide resistance regulatory protein (233 aa).

The H-T-H motif DNA-binding region spans 93 to 112 (RKAARQAADYSRPMIEQAVA). The tract at residues 190–233 (PPEATEVPESGRLTSVDGSAEAVLDPEVQAKEAAEEAAKRDDQA) is disordered. The span at 217–233 (VQAKEAAEEAAKRDDQA) shows a compositional bias: basic and acidic residues.

Functionally, seems to be involved in the regulation of nhs expression. This chain is Putative nosiheptide resistance regulatory protein, found in Streptomyces actuosus.